The chain runs to 741 residues: Catalase-peroxidase 2 (741 aa).

The N-terminal stretch at 1 to 27 (MKINTLPTLSALTLAMSLALGAGMATA) is a signal peptide. The segment at residues 106-229 (WHSAGVYRIF…MGATQMGLIY (124 aa)) is a cross-link (tryptophyl-tyrosyl-methioninium (Trp-Tyr) (with M-255)). The active-site Proton acceptor is His107. The segment at residues 229–255 (YVNPEGPNGVPDPLASAKEIRDTFGRM) is a cross-link (tryptophyl-tyrosyl-methioninium (Tyr-Met) (with W-106)). Residue His270 participates in heme b binding.

It belongs to the peroxidase family. Peroxidase/catalase subfamily. As to quaternary structure, homodimer or homotetramer. The cofactor is heme b. Formation of the three residue Trp-Tyr-Met cross-link is important for the catalase, but not the peroxidase activity of the enzyme.

It catalyses the reaction H2O2 + AH2 = A + 2 H2O. The catalysed reaction is 2 H2O2 = O2 + 2 H2O. In terms of biological role, bifunctional enzyme with both catalase and broad-spectrum peroxidase activity. The polypeptide is Catalase-peroxidase 2 (Shewanella oneidensis (strain ATCC 700550 / JCM 31522 / CIP 106686 / LMG 19005 / NCIMB 14063 / MR-1)).